The sequence spans 29 residues: Cyclotide psyleio C (29 aa).

Residues 1 to 29 (GDLPVCGETCFGGTCNTPGCVCAWPVCTR) constitute a cross-link (cyclopeptide (Gly-Arg)). 3 disulfides stabilise this stretch: Cys-6–Cys-20, Cys-10–Cys-22, and Cys-15–Cys-27.

This is a cyclic peptide.

Its function is as follows. Probably participates in a plant defense mechanism. This chain is Cyclotide psyleio C, found in Psychotria leiocarpa.